We begin with the raw amino-acid sequence, 85 residues long: MNLLDFFRERKKKETPAAIAKERLQIIVAHERGQRSEPDYLPALQKELVEVIRKYVNIDSDQVHVALEDQGSCSILELNITLPDR.

The protein belongs to the MinE family.

In terms of biological role, prevents the cell division inhibition by proteins MinC and MinD at internal division sites while permitting inhibition at polar sites. This ensures cell division at the proper site by restricting the formation of a division septum at the midpoint of the long axis of the cell. This is Cell division topological specificity factor from Stutzerimonas stutzeri (strain A1501) (Pseudomonas stutzeri).